A 183-amino-acid chain; its full sequence is ATP-dependent protease subunit HslV (183 aa).

Residue threonine 13 is part of the active site. Na(+) contacts are provided by glycine 168, cysteine 171, and threonine 174.

This sequence belongs to the peptidase T1B family. HslV subfamily. As to quaternary structure, a double ring-shaped homohexamer of HslV is capped on each side by a ring-shaped HslU homohexamer. The assembly of the HslU/HslV complex is dependent on binding of ATP.

It localises to the cytoplasm. The catalysed reaction is ATP-dependent cleavage of peptide bonds with broad specificity.. With respect to regulation, allosterically activated by HslU binding. Functionally, protease subunit of a proteasome-like degradation complex believed to be a general protein degrading machinery. This Xanthomonas campestris pv. campestris (strain ATCC 33913 / DSM 3586 / NCPPB 528 / LMG 568 / P 25) protein is ATP-dependent protease subunit HslV.